The primary structure comprises 171 residues: Adenine phosphoribosyltransferase (171 aa).

This sequence belongs to the purine/pyrimidine phosphoribosyltransferase family. Homodimer.

It localises to the cytoplasm. The enzyme catalyses AMP + diphosphate = 5-phospho-alpha-D-ribose 1-diphosphate + adenine. It functions in the pathway purine metabolism; AMP biosynthesis via salvage pathway; AMP from adenine: step 1/1. Catalyzes a salvage reaction resulting in the formation of AMP, that is energically less costly than de novo synthesis. This chain is Adenine phosphoribosyltransferase, found in Syntrophotalea carbinolica (strain DSM 2380 / NBRC 103641 / GraBd1) (Pelobacter carbinolicus).